A 178-amino-acid polypeptide reads, in one-letter code: PRA1 family protein 2 (178 aa).

Residues 1–41 (MSEVRLPPLRALDDFVLGSARLAAPDPGDPQRWCHRVINNL) are Cytoplasmic-facing. The chain crosses the membrane as a helical span at residues 42-62 (LYYQTNYLLCFGISLALAGYI). Over 63–64 (RP) the chain is Extracellular. The chain crosses the membrane as a helical span at residues 65 to 85 (LHTLLSALVVVVALGVLVWAA). At 86 to 96 (ETRAAVRRCRR) the chain is on the cytoplasmic side. The chain crosses the membrane as a helical span at residues 97 to 119 (SHPAACLAAVLAISLFILWAVGG). Residues 120 to 122 (AFT) lie on the Extracellular side of the membrane. Residues 123-140 (FLLSITAPVFLILLHASL) traverse the membrane as a helical segment. The Cytoplasmic segment spans residues 141–178 (RLRNLKNKIENKIESIGLKRTPMGLLLEALGQEQEAGS).

This sequence belongs to the PRA1 family. Interacts with CCR5 and GDE1.

The protein resides in the endosome membrane. May be involved in ER/Golgi transport and vesicular traffic. Plays a proapoptotic role in cerulenin-induced neuroblastoma apoptosis. The chain is PRA1 family protein 2 (Praf2) from Mus musculus (Mouse).